The sequence spans 198 residues: Glycerol-3-phosphate acyltransferase (198 aa).

Helical transmembrane passes span 4 to 24, 53 to 75, 80 to 102, 112 to 132, and 134 to 154; these read LALI…AVLI, SAAG…GGYF, PFML…FFHF, LGAL…CWVV, and VLVT…APLF.

Belongs to the PlsY family. Probably interacts with PlsX.

It localises to the cell inner membrane. The enzyme catalyses an acyl phosphate + sn-glycerol 3-phosphate = a 1-acyl-sn-glycero-3-phosphate + phosphate. Its pathway is lipid metabolism; phospholipid metabolism. Its function is as follows. Catalyzes the transfer of an acyl group from acyl-phosphate (acyl-PO(4)) to glycerol-3-phosphate (G3P) to form lysophosphatidic acid (LPA). This enzyme utilizes acyl-phosphate as fatty acyl donor, but not acyl-CoA or acyl-ACP. The protein is Glycerol-3-phosphate acyltransferase of Aliivibrio fischeri (strain ATCC 700601 / ES114) (Vibrio fischeri).